The following is a 556-amino-acid chain: 2-succinyl-5-enolpyruvyl-6-hydroxy-3-cyclohexene-1-carboxylate synthase (556 aa).

It belongs to the TPP enzyme family. MenD subfamily. Homodimer. It depends on Mg(2+) as a cofactor. Mn(2+) is required as a cofactor. Requires thiamine diphosphate as cofactor.

It carries out the reaction isochorismate + 2-oxoglutarate + H(+) = 5-enolpyruvoyl-6-hydroxy-2-succinyl-cyclohex-3-ene-1-carboxylate + CO2. The protein operates within quinol/quinone metabolism; 1,4-dihydroxy-2-naphthoate biosynthesis; 1,4-dihydroxy-2-naphthoate from chorismate: step 2/7. It participates in quinol/quinone metabolism; menaquinone biosynthesis. Catalyzes the thiamine diphosphate-dependent decarboxylation of 2-oxoglutarate and the subsequent addition of the resulting succinic semialdehyde-thiamine pyrophosphate anion to isochorismate to yield 2-succinyl-5-enolpyruvyl-6-hydroxy-3-cyclohexene-1-carboxylate (SEPHCHC). The sequence is that of 2-succinyl-5-enolpyruvyl-6-hydroxy-3-cyclohexene-1-carboxylate synthase from Salmonella typhimurium (strain LT2 / SGSC1412 / ATCC 700720).